The sequence spans 962 residues: Glycine dehydrogenase (decarboxylating) (962 aa).

An N6-(pyridoxal phosphate)lysine modification is found at K710.

Belongs to the GcvP family. In terms of assembly, the glycine cleavage system is composed of four proteins: P, T, L and H. It depends on pyridoxal 5'-phosphate as a cofactor.

The catalysed reaction is N(6)-[(R)-lipoyl]-L-lysyl-[glycine-cleavage complex H protein] + glycine + H(+) = N(6)-[(R)-S(8)-aminomethyldihydrolipoyl]-L-lysyl-[glycine-cleavage complex H protein] + CO2. Its function is as follows. The glycine cleavage system catalyzes the degradation of glycine. The P protein binds the alpha-amino group of glycine through its pyridoxal phosphate cofactor; CO(2) is released and the remaining methylamine moiety is then transferred to the lipoamide cofactor of the H protein. The sequence is that of Glycine dehydrogenase (decarboxylating) from Idiomarina loihiensis (strain ATCC BAA-735 / DSM 15497 / L2-TR).